The chain runs to 182 residues: ATP-dependent protease subunit HslV (182 aa).

Thr10 is an active-site residue. 3 residues coordinate Na(+): Ala166, Cys169, and Ser172.

It belongs to the peptidase T1B family. HslV subfamily. A double ring-shaped homohexamer of HslV is capped on each side by a ring-shaped HslU homohexamer. The assembly of the HslU/HslV complex is dependent on binding of ATP.

The protein resides in the cytoplasm. The catalysed reaction is ATP-dependent cleavage of peptide bonds with broad specificity.. Its activity is regulated as follows. Allosterically activated by HslU binding. Protease subunit of a proteasome-like degradation complex believed to be a general protein degrading machinery. This is ATP-dependent protease subunit HslV from Rickettsia prowazekii (strain Madrid E).